We begin with the raw amino-acid sequence, 853 residues long: Penicillin-binding protein 1A (853 aa).

Residues 1–6 lie on the Cytoplasmic side of the membrane; the sequence is MRIAKL. Residues 7-27 traverse the membrane as a helical; Signal-anchor for type II membrane protein segment; that stretch reads ILNTLLTLCILGLVAGGMLYF. Residues 28–853 are Periplasmic-facing; that stretch reads HLKSELQQPM…TPATQPQELF (826 aa). The tract at residues 37–205 is transglycosylase; sequence MQIYTADGKL…STMNPLYSLK (169 aa). The Proton donor; for transglycosylase activity role is filled by Glu75. The tract at residues 387–681 is transpeptidase; that stretch reads QRANGEWQLG…RVISGELAFL (295 aa). Ser441 (acyl-ester intermediate; for transpeptidase activity) is an active-site residue. The tract at residues 615–636 is disordered; the sequence is NALKPTDDSTNGEELDQQPETV.

In the N-terminal section; belongs to the glycosyltransferase 51 family. This sequence in the C-terminal section; belongs to the transpeptidase family.

It localises to the cell inner membrane. It carries out the reaction [GlcNAc-(1-&gt;4)-Mur2Ac(oyl-L-Ala-gamma-D-Glu-L-Lys-D-Ala-D-Ala)](n)-di-trans,octa-cis-undecaprenyl diphosphate + beta-D-GlcNAc-(1-&gt;4)-Mur2Ac(oyl-L-Ala-gamma-D-Glu-L-Lys-D-Ala-D-Ala)-di-trans,octa-cis-undecaprenyl diphosphate = [GlcNAc-(1-&gt;4)-Mur2Ac(oyl-L-Ala-gamma-D-Glu-L-Lys-D-Ala-D-Ala)](n+1)-di-trans,octa-cis-undecaprenyl diphosphate + di-trans,octa-cis-undecaprenyl diphosphate + H(+). It catalyses the reaction Preferential cleavage: (Ac)2-L-Lys-D-Ala-|-D-Ala. Also transpeptidation of peptidyl-alanyl moieties that are N-acyl substituents of D-alanine.. It functions in the pathway cell wall biogenesis; peptidoglycan biosynthesis. Its function is as follows. Cell wall formation. Synthesis of cross-linked peptidoglycan from the lipid intermediates. The enzyme has a penicillin-insensitive transglycosylase N-terminal domain (formation of linear glycan strands) and a penicillin-sensitive transpeptidase C-terminal domain (cross-linking of the peptide subunits). The chain is Penicillin-binding protein 1A (mrcA) from Haemophilus influenzae (strain ATCC 51907 / DSM 11121 / KW20 / Rd).